Consider the following 414-residue polypeptide: Serine hydroxymethyltransferase (414 aa).

(6S)-5,6,7,8-tetrahydrofolate-binding positions include L121 and 125 to 127 (GHL). K229 carries the N6-(pyridoxal phosphate)lysine modification.

The protein belongs to the SHMT family. In terms of assembly, homodimer. The cofactor is pyridoxal 5'-phosphate.

It is found in the cytoplasm. The enzyme catalyses (6R)-5,10-methylene-5,6,7,8-tetrahydrofolate + glycine + H2O = (6S)-5,6,7,8-tetrahydrofolate + L-serine. It participates in one-carbon metabolism; tetrahydrofolate interconversion. It functions in the pathway amino-acid biosynthesis; glycine biosynthesis; glycine from L-serine: step 1/1. Its function is as follows. Catalyzes the reversible interconversion of serine and glycine with tetrahydrofolate (THF) serving as the one-carbon carrier. This reaction serves as the major source of one-carbon groups required for the biosynthesis of purines, thymidylate, methionine, and other important biomolecules. Also exhibits THF-independent aldolase activity toward beta-hydroxyamino acids, producing glycine and aldehydes, via a retro-aldol mechanism. The chain is Serine hydroxymethyltransferase from Polynucleobacter necessarius subsp. necessarius (strain STIR1).